The chain runs to 274 residues: RNA polymerase sigma factor SigI4 (274 aa).

Positions 87 to 100 (EEYSVGLMAFNEAI) match the Polymerase core binding motif. A DNA-binding region (H-T-H motif) is located at residues 226 to 245 (LSELMGLVNVHRKTVERNRK).

The protein belongs to the sigma-70 factor family. SigI subfamily. As to quaternary structure, interacts with RsgI4.

The protein resides in the cytoplasm. With respect to regulation, negatively regulated by the anti-sigma-I factor RsgI4. Binding of the polysaccharide substrate to RsgI4 may lead to the release and activation of SigI4. Its function is as follows. Sigma factors are initiation factors that promote the attachment of RNA polymerase to specific initiation sites and are then released. This sigma factor is involved in regulation of cellulosomal genes via an external polysaccharide-sensing mechanism. This Acetivibrio thermocellus (strain ATCC 27405 / DSM 1237 / JCM 9322 / NBRC 103400 / NCIMB 10682 / NRRL B-4536 / VPI 7372) (Clostridium thermocellum) protein is RNA polymerase sigma factor SigI4.